A 264-amino-acid chain; its full sequence is PDZ domain-containing protein 9 (264 aa).

A PDZ domain is found at 30 to 109 (QTKLTVGSLG…GTVLQIKVYR (80 aa)).

In Homo sapiens (Human), this protein is PDZ domain-containing protein 9 (PDZD9).